Reading from the N-terminus, the 351-residue chain is DNA polymerase IV (351 aa).

Residues I4–G185 form the UmuC domain. Mg(2+) contacts are provided by D8 and D103. Residue E104 is part of the active site.

The protein belongs to the DNA polymerase type-Y family. Monomer. It depends on Mg(2+) as a cofactor.

It localises to the cytoplasm. It carries out the reaction DNA(n) + a 2'-deoxyribonucleoside 5'-triphosphate = DNA(n+1) + diphosphate. In terms of biological role, poorly processive, error-prone DNA polymerase involved in untargeted mutagenesis. Copies undamaged DNA at stalled replication forks, which arise in vivo from mismatched or misaligned primer ends. These misaligned primers can be extended by PolIV. Exhibits no 3'-5' exonuclease (proofreading) activity. May be involved in translesional synthesis, in conjunction with the beta clamp from PolIII. The polypeptide is DNA polymerase IV (Escherichia coli O9:H4 (strain HS)).